The following is a 159-amino-acid chain: Endoribonuclease YbeY (159 aa).

The Zn(2+) site is built by H122, H126, and H132.

The protein belongs to the endoribonuclease YbeY family. The cofactor is Zn(2+).

It localises to the cytoplasm. In terms of biological role, single strand-specific metallo-endoribonuclease involved in late-stage 70S ribosome quality control and in maturation of the 3' terminus of the 16S rRNA. This Roseiflexus castenholzii (strain DSM 13941 / HLO8) protein is Endoribonuclease YbeY.